We begin with the raw amino-acid sequence, 317 residues long: 2,3-dihydroxyphenylpropionate/2,3-dihydroxicinnamic acid 1,2-dioxygenase (317 aa).

Histidine 115 acts as the Proton donor in catalysis. Histidine 179 functions as the Proton acceptor in the catalytic mechanism.

The protein belongs to the LigB/MhpB extradiol dioxygenase family. As to quaternary structure, homotetramer. Requires Fe(2+) as cofactor.

It carries out the reaction 3-(2,3-dihydroxyphenyl)propanoate + O2 = (2Z,4E)-2-hydroxy-6-oxonona-2,4-dienedioate + H(+). It catalyses the reaction (2E)-3-(2,3-dihydroxyphenyl)prop-2-enoate + O2 = (2Z,4E,7E)-2-hydroxy-6-oxonona-2,4,7-trienedioate + H(+). It participates in aromatic compound metabolism; 3-phenylpropanoate degradation. Catalyzes the non-heme iron(II)-dependent oxidative cleavage of 2,3-dihydroxyphenylpropionic acid and 2,3-dihydroxicinnamic acid into 2-hydroxy-6-ketononadienedioate and 2-hydroxy-6-ketononatrienedioate, respectively. In Paraburkholderia phymatum (strain DSM 17167 / CIP 108236 / LMG 21445 / STM815) (Burkholderia phymatum), this protein is 2,3-dihydroxyphenylpropionate/2,3-dihydroxicinnamic acid 1,2-dioxygenase.